A 453-amino-acid polypeptide reads, in one-letter code: C4-dicarboxylate TRAP transporter large permease protein DctM (453 aa).

13 consecutive transmembrane segments (helical) span residues 2 to 22 (AVAL…PIAI), 50 to 70 (AFAG…STFM), 82 to 102 (FAIA…VVAC), 104 to 124 (MFAA…SIVI), 139 to 159 (GVIC…VMVV), 172 to 192 (FLGG…AIYI), 217 to 237 (ASWG…GIFT), 243 to 263 (AVAA…MGPF), 289 to 309 (LYDA…ALIL), 326 to 346 (MLSA…ILLV), 356 to 376 (LLVI…IDPI), 380 to 400 (IMMV…LNLF), and 417 to 437 (ALPW…VPWV).

It belongs to the TRAP transporter large permease family. The complex comprises the extracytoplasmic solute receptor protein DctP, and the two transmembrane proteins DctQ and DctM.

The protein localises to the cell inner membrane. Part of the tripartite ATP-independent periplasmic (TRAP) transport system DctPQM involved in C4-dicarboxylates uptake. This is C4-dicarboxylate TRAP transporter large permease protein DctM from Vibrio cholerae serotype O1 (strain ATCC 39315 / El Tor Inaba N16961).